The primary structure comprises 171 residues: Large ribosomal subunit protein bL9 (171 aa).

The protein belongs to the bacterial ribosomal protein bL9 family.

Binds to the 23S rRNA. This Rickettsia peacockii (strain Rustic) protein is Large ribosomal subunit protein bL9.